The sequence spans 209 residues: Uracil phosphoribosyltransferase (209 aa).

5-phospho-alpha-D-ribose 1-diphosphate-binding positions include Arg-79, Arg-104, and Asp-131–Ser-139. Uracil contacts are provided by residues Ile-194 and Gly-199 to Ala-201. Asp-200 is a binding site for 5-phospho-alpha-D-ribose 1-diphosphate.

The protein belongs to the UPRTase family. Mg(2+) serves as cofactor.

The catalysed reaction is UMP + diphosphate = 5-phospho-alpha-D-ribose 1-diphosphate + uracil. Its pathway is pyrimidine metabolism; UMP biosynthesis via salvage pathway; UMP from uracil: step 1/1. With respect to regulation, allosterically activated by GTP. In terms of biological role, catalyzes the conversion of uracil and 5-phospho-alpha-D-ribose 1-diphosphate (PRPP) to UMP and diphosphate. This Streptococcus uberis (strain ATCC BAA-854 / 0140J) protein is Uracil phosphoribosyltransferase.